Here is a 429-residue protein sequence, read N- to C-terminus: MASGEKSRMLFERTKELFPGGVNSPVRAAVKPYPFYVKRGEGAYLYTVDGARIVDLVLAYGPLILGHKHPRVLEAVEEALARGWLYGAPGEAEVLLAEKILGYVKRGGMIRFVNSGTEATMTAIRLARGYTGRDLILKFDGCYHGSHDAVLVAAGSAAAHYGVPTSAGVPEAVARLTLVTPYNDVEALERVFAEYGDRIAGVIVEPVIANAGVIPPRREFLAALQRLSRESGALLILDEVVTGFRLGLEGAQGYFNIEGDIIVLGKIIGGGFPVGAVAGSREVMSLLTPQGKVFNAGTFNAHPITMAAGLATLKALEEEPVYSVSREAAKALEEAASEVLDRTGLPYTINRVESMMQLFIGVEEVSNAAQARKADKKFYVKLHEEMLRRGVFIAPSNLEAVFTGLPHQGEALEIAVEGLRSSLKTVLGS.

Lys-266 is subject to N6-(pyridoxal phosphate)lysine.

This sequence belongs to the class-III pyridoxal-phosphate-dependent aminotransferase family. HemL subfamily. Requires pyridoxal 5'-phosphate as cofactor.

Its subcellular location is the cytoplasm. The catalysed reaction is (S)-4-amino-5-oxopentanoate = 5-aminolevulinate. The protein operates within porphyrin-containing compound metabolism; protoporphyrin-IX biosynthesis; 5-aminolevulinate from L-glutamyl-tRNA(Glu): step 2/2. In Aeropyrum pernix (strain ATCC 700893 / DSM 11879 / JCM 9820 / NBRC 100138 / K1), this protein is Glutamate-1-semialdehyde 2,1-aminomutase (hemL).